A 322-amino-acid chain; its full sequence is MDTSSINAQSIFDDNAAALKLSWLTGHEGWERGFSAETVATATSSADLVGHLNLIHPNRIQVLGEAETNYYQRQSDEDRSRHMAELIALEPPFLVVAGGVAAPPELVLRCTRSSTPLFTTPMSPAAVIDSLRLYMSRILAPRATLHGVFLDILGMGVLLTGDSGLGKSELGLELISRGHGLVADDAVDFVRLGPDFVEGRCPPLLQNLLEVRGLGLLDIKTIFGETAVRRKMKLKLIVQLVRRPDGEFQRLPLESQTVDVLGLPISKVTIQVAAGRNLAVLVEAAVRNTILQLRGIDTLRDFMDRQRLAMQDPDSQFPGKLI.

Residues histidine 146 and lysine 167 contribute to the active site. Glycine 161–serine 168 is a binding site for ATP. Serine 168 contacts Mg(2+). Aspartate 185 acts as the Proton acceptor; for phosphorylation activity. Proton donor; for dephosphorylation activity in catalysis. The important for the catalytic mechanism of both phosphorylation and dephosphorylation stretch occupies residues leucine 209–aspartate 218. Residue glutamate 210 coordinates Mg(2+). Arginine 250 is a catalytic residue. Residues glutamine 271–arginine 276 form an important for the catalytic mechanism of dephosphorylation region.

Belongs to the HPrK/P family. In terms of assembly, homohexamer. Requires Mg(2+) as cofactor.

It catalyses the reaction [HPr protein]-L-serine + ATP = [HPr protein]-O-phospho-L-serine + ADP + H(+). The enzyme catalyses [HPr protein]-O-phospho-L-serine + phosphate + H(+) = [HPr protein]-L-serine + diphosphate. Functionally, catalyzes the ATP- as well as the pyrophosphate-dependent phosphorylation of a specific serine residue in HPr, a phosphocarrier protein of the phosphoenolpyruvate-dependent sugar phosphotransferase system (PTS). HprK/P also catalyzes the pyrophosphate-producing, inorganic phosphate-dependent dephosphorylation (phosphorolysis) of seryl-phosphorylated HPr (P-Ser-HPr). The sequence is that of HPr kinase/phosphorylase from Paraburkholderia phymatum (strain DSM 17167 / CIP 108236 / LMG 21445 / STM815) (Burkholderia phymatum).